Consider the following 396-residue polypeptide: Elongation factor Tu (396 aa).

The tr-type G domain occupies 10-206 (KPHVNIGTIG…AVDAYIPEPE (197 aa)). Residues 19 to 26 (GHVDHGKT) are G1. 19–26 (GHVDHGKT) is a binding site for GTP. Residue T26 participates in Mg(2+) binding. The G2 stretch occupies residues 60-64 (GITIA). The tract at residues 81 to 84 (DCPG) is G3. GTP contacts are provided by residues 81 to 85 (DCPGH) and 136 to 139 (NKAD). Positions 136–139 (NKAD) are G4. Residues 174–176 (SAL) form a G5 region.

The protein belongs to the TRAFAC class translation factor GTPase superfamily. Classic translation factor GTPase family. EF-Tu/EF-1A subfamily. Monomer.

Its subcellular location is the cytoplasm. The enzyme catalyses GTP + H2O = GDP + phosphate + H(+). In terms of biological role, GTP hydrolase that promotes the GTP-dependent binding of aminoacyl-tRNA to the A-site of ribosomes during protein biosynthesis. This Geobacter metallireducens (strain ATCC 53774 / DSM 7210 / GS-15) protein is Elongation factor Tu.